The primary structure comprises 191 residues: Outer membrane lipoprotein DolP (191 aa).

Residues 1-18 (MKAFSPLAVLISALLLQG) form the signal peptide. C19 carries N-palmitoyl cysteine lipidation. A lipid anchor (S-diacylglycerol cysteine) is attached at C19. BON domains follow at residues 46-115 (DDGT…RQGQ) and 124-191 (NDTW…TYIK).

This sequence belongs to the lipoprotein DolP family.

The protein localises to the cell outer membrane. In terms of biological role, plays an important role in maintaining outer membrane integrity. Contributes to virulence. The chain is Outer membrane lipoprotein DolP from Salmonella typhimurium (strain LT2 / SGSC1412 / ATCC 700720).